Here is a 685-residue protein sequence, read N- to C-terminus: Probable inactive leucine-rich repeat receptor-like protein kinase At1g66830 (685 aa).

Positions 1–21 (MSQLFLILCFILTHFFAIATS) are cleaved as a signal peptide. Residues 22 to 305 (LNDQGLALLS…RRANHHSRLC (284 aa)) lie on the Extracellular side of the membrane. 2 N-linked (GlcNAc...) asparagine glycosylation sites follow: Asn-38 and Asn-48. LRR repeat units follow at residues 65 to 89 (DMRVVSIRLPNKRLSGSLDPSIGSL), 90 to 113 (LSLRHINLRDNDFQGKLPVELFGL), 115 to 136 (GLQSLVLSGNSFSGFVPEEIGS), 137 to 161 (LKSLMTLDLSENSFNGSISLSLIPC), 162 to 185 (KKLKTLVLSKNSFSGDLPTGLGSN), 186 to 210 (LVHLRTLNLSFNRLTGTIPEDVGSL), 212 to 234 (NLKGTLDLSHNFFSGMIPTSLGN), and 235 to 260 (LPELLYVDLSYNNLSGPIPKFNVLLN). The N-linked (GlcNAc...) asparagine glycan is linked to Asn-151. The N-linked (GlcNAc...) asparagine glycan is linked to Asn-193. Asn-247 carries an N-linked (GlcNAc...) asparagine glycan. Residues 306–326 (IILTATGGTVAGIIFLASLFI) traverse the membrane as a helical segment. The Cytoplasmic segment spans residues 327-685 (YYLRKASARA…ESFEKLVTSI (359 aa)). The Protein kinase domain maps to 397 to 682 (KASAFLLGKS…SVLESFEKLV (286 aa)). 3 positions are modified to phosphoserine: Ser-399, Ser-480, and Ser-590.

Belongs to the protein kinase superfamily. Ser/Thr protein kinase family.

Its subcellular location is the cell membrane. This is Probable inactive leucine-rich repeat receptor-like protein kinase At1g66830 from Arabidopsis thaliana (Mouse-ear cress).